The chain runs to 110 residues: Small ribosomal subunit protein uS10m (110 aa).

The protein belongs to the universal ribosomal protein uS10 family.

The protein localises to the mitochondrion. This is Small ribosomal subunit protein uS10m (RPS10) from Pisum sativum (Garden pea).